We begin with the raw amino-acid sequence, 894 residues long: Alanine--tRNA ligase (894 aa).

Belongs to the class-II aminoacyl-tRNA synthetase family.

It is found in the cytoplasm. It carries out the reaction tRNA(Ala) + L-alanine + ATP = L-alanyl-tRNA(Ala) + AMP + diphosphate. Catalyzes the attachment of alanine to tRNA(Ala) in a two-step reaction: alanine is first activated by ATP to form Ala-AMP and then transferred to the acceptor end of tRNA(Ala). Also edits incorrectly charged Ser-tRNA(Ala) and Gly-tRNA(Ala) via its editing domain. This Leuconostoc citreum (strain KM20) protein is Alanine--tRNA ligase (alaS).